A 649-amino-acid chain; its full sequence is 1-deoxy-D-xylulose-5-phosphate synthase (649 aa).

Thiamine diphosphate is bound by residues His84 and 125-127 (GHS). Asp156 lines the Mg(2+) pocket. Thiamine diphosphate contacts are provided by residues 157-158 (GS), Asn185, Phe292, and Glu385. Asn185 lines the Mg(2+) pocket.

Belongs to the transketolase family. DXPS subfamily. As to quaternary structure, homodimer. Mg(2+) is required as a cofactor. Thiamine diphosphate serves as cofactor.

It catalyses the reaction D-glyceraldehyde 3-phosphate + pyruvate + H(+) = 1-deoxy-D-xylulose 5-phosphate + CO2. It functions in the pathway metabolic intermediate biosynthesis; 1-deoxy-D-xylulose 5-phosphate biosynthesis; 1-deoxy-D-xylulose 5-phosphate from D-glyceraldehyde 3-phosphate and pyruvate: step 1/1. Catalyzes the acyloin condensation reaction between C atoms 2 and 3 of pyruvate and glyceraldehyde 3-phosphate to yield 1-deoxy-D-xylulose-5-phosphate (DXP). This Saccharophagus degradans (strain 2-40 / ATCC 43961 / DSM 17024) protein is 1-deoxy-D-xylulose-5-phosphate synthase.